We begin with the raw amino-acid sequence, 140 residues long: Mialostatin (140 aa).

Positions 1 to 18 are cleaved as a signal peptide; sequence MAFFKSAVFLVCVVLAAA. 2 cysteine pairs are disulfide-bonded: Cys90–Cys103 and Cys114–Cys134.

Belongs to the cystatin family. Expressed in midgut (at protein level).

It is found in the secreted. In terms of biological role, inhibitor of cysteine proteinases. Inhibits several endogenous midgut digestive cysteine proteases, such as cathepsin L1, L3, B and C, but not aspartic protease cathepsin D1 and cysteine protease legumain. Inhibits proteolysis of blood proteins catalyzed by tick gut cysteine cathepsins. Inhibits host cathepsin B (CSTB), C (CTSC), H (CTSH), K (CTSK), L (CTSL) and S (CTSS). In Ixodes ricinus (Common tick), this protein is Mialostatin.